The primary structure comprises 333 residues: 4-hydroxy-3-methylbut-2-enyl diphosphate reductase (333 aa).

Cys-34 is a [4Fe-4S] cluster binding site. Positions 63 and 96 each coordinate (2E)-4-hydroxy-3-methylbut-2-enyl diphosphate. Dimethylallyl diphosphate-binding residues include His-63 and His-96. Residues His-63 and His-96 each contribute to the isopentenyl diphosphate site. Cys-118 is a binding site for [4Fe-4S] cluster. His-146 contacts (2E)-4-hydroxy-3-methylbut-2-enyl diphosphate. Position 146 (His-146) interacts with dimethylallyl diphosphate. His-146 contributes to the isopentenyl diphosphate binding site. Glu-148 acts as the Proton donor in catalysis. Thr-186 serves as a coordination point for (2E)-4-hydroxy-3-methylbut-2-enyl diphosphate. Position 216 (Cys-216) interacts with [4Fe-4S] cluster. 4 residues coordinate (2E)-4-hydroxy-3-methylbut-2-enyl diphosphate: Ser-244, Ser-245, Asn-246, and Ser-289. Residues Ser-244, Ser-245, Asn-246, and Ser-289 each coordinate dimethylallyl diphosphate. Residues Ser-244, Ser-245, Asn-246, and Ser-289 each coordinate isopentenyl diphosphate.

It belongs to the IspH family. The cofactor is [4Fe-4S] cluster.

It catalyses the reaction isopentenyl diphosphate + 2 oxidized [2Fe-2S]-[ferredoxin] + H2O = (2E)-4-hydroxy-3-methylbut-2-enyl diphosphate + 2 reduced [2Fe-2S]-[ferredoxin] + 2 H(+). The catalysed reaction is dimethylallyl diphosphate + 2 oxidized [2Fe-2S]-[ferredoxin] + H2O = (2E)-4-hydroxy-3-methylbut-2-enyl diphosphate + 2 reduced [2Fe-2S]-[ferredoxin] + 2 H(+). Its pathway is isoprenoid biosynthesis; dimethylallyl diphosphate biosynthesis; dimethylallyl diphosphate from (2E)-4-hydroxy-3-methylbutenyl diphosphate: step 1/1. The protein operates within isoprenoid biosynthesis; isopentenyl diphosphate biosynthesis via DXP pathway; isopentenyl diphosphate from 1-deoxy-D-xylulose 5-phosphate: step 6/6. Functionally, catalyzes the conversion of 1-hydroxy-2-methyl-2-(E)-butenyl 4-diphosphate (HMBPP) into a mixture of isopentenyl diphosphate (IPP) and dimethylallyl diphosphate (DMAPP). Acts in the terminal step of the DOXP/MEP pathway for isoprenoid precursor biosynthesis. This chain is 4-hydroxy-3-methylbut-2-enyl diphosphate reductase, found in Mycolicibacterium gilvum (strain PYR-GCK) (Mycobacterium gilvum (strain PYR-GCK)).